The primary structure comprises 66 residues: Beta-toxin Cb3 (66 aa).

The 66-residue stretch at 1–66 (KEGYIVNYYD…VWPLPNKTCL (66 aa)) folds into the LCN-type CS-alpha/beta domain. Intrachain disulfides connect Cys-12-Cys-65, Cys-16-Cys-41, Cys-25-Cys-46, and Cys-29-Cys-48.

The protein belongs to the long (4 C-C) scorpion toxin superfamily. Sodium channel inhibitor family. Beta subfamily. As to expression, expressed by the venom gland.

Its subcellular location is the secreted. Its function is as follows. Beta toxins bind voltage-independently at site-4 of sodium channels (Nav) and reduces peak current and shifts the voltage of activation toward more negative potentials thereby affecting sodium channel activation and promoting spontaneous and repetitive firing. Has an inhibitory effect on voltage-gated sodium channels hNav1.1/SCN1A, hNav1.2/SCN2A, hNav1.4/SCN4A and hNav1.6/SCN8A. Reduces the peak current of hNav1.5/SCN5A but does not shift its voltage of activation. Also affects the inactivation processes of hNav1.1/SCN1A, hNav1.4/SCN4A, hNav1.5/SCN5A and hNav1.6/SCN8A. This toxin is active against mammals and lethal to mice. The sequence is that of Beta-toxin Cb3 from Centruroides baergi (Scorpion).